We begin with the raw amino-acid sequence, 431 residues long: Beta-lactamase hydrolase-like protein (431 aa).

Zn(2+) contacts are provided by histidine 212, histidine 214, and histidine 286. Position 309 (aspartate 309) interacts with substrate.

It belongs to the metallo-beta-lactamase superfamily. Zn(2+) is required as a cofactor.

Its function is as follows. Could play a role in cell adherence or biofilm development. The sequence is that of Beta-lactamase hydrolase-like protein from Agrobacterium fabrum (strain C58 / ATCC 33970) (Agrobacterium tumefaciens (strain C58)).